We begin with the raw amino-acid sequence, 166 residues long: MTWTTPDLCDRYPEVTIAEPPFRHFGGRTVFCGPMVTVRCFEDNSRMRELAATPGDARVLVVDGQGSLKHALLGDQIAANAVANGWAGVLIHGGVRDVEMLASLPLGVLALAACPRRTERRDLGDVDVPVSFAGVPFVPGHWLYADANGVLVSPQPLSLDGASGSI.

Substrate-binding positions include Gly74 to Ile77 and Arg96. A divalent metal cation is bound at residue Asp97.

It belongs to the class II aldolase/RraA-like family. As to quaternary structure, homotrimer. A divalent metal cation is required as a cofactor.

The catalysed reaction is 4-hydroxy-4-methyl-2-oxoglutarate = 2 pyruvate. It catalyses the reaction oxaloacetate + H(+) = pyruvate + CO2. In terms of biological role, catalyzes the aldol cleavage of 4-hydroxy-4-methyl-2-oxoglutarate (HMG) into 2 molecules of pyruvate. Also contains a secondary oxaloacetate (OAA) decarboxylase activity due to the common pyruvate enolate transition state formed following C-C bond cleavage in the retro-aldol and decarboxylation reactions. In Xanthomonas oryzae pv. oryzae (strain MAFF 311018), this protein is Putative 4-hydroxy-4-methyl-2-oxoglutarate aldolase.